The primary structure comprises 396 residues: 8-amino-7-oxononanoate synthase (396 aa).

Arg21 is a substrate binding site. Position 108 to 109 (108 to 109 (GY)) interacts with pyridoxal 5'-phosphate. His133 provides a ligand contact to substrate. Positions 179, 207, and 236 each coordinate pyridoxal 5'-phosphate. Lys239 carries the N6-(pyridoxal phosphate)lysine modification. Residue Thr353 participates in substrate binding.

This sequence belongs to the class-II pyridoxal-phosphate-dependent aminotransferase family. BioF subfamily. In terms of assembly, homodimer. The cofactor is pyridoxal 5'-phosphate.

The catalysed reaction is 6-carboxyhexanoyl-[ACP] + L-alanine + H(+) = (8S)-8-amino-7-oxononanoate + holo-[ACP] + CO2. It functions in the pathway cofactor biosynthesis; biotin biosynthesis. Functionally, catalyzes the decarboxylative condensation of pimeloyl-[acyl-carrier protein] and L-alanine to produce 8-amino-7-oxononanoate (AON), [acyl-carrier protein], and carbon dioxide. This chain is 8-amino-7-oxononanoate synthase, found in Hahella chejuensis (strain KCTC 2396).